We begin with the raw amino-acid sequence, 402 residues long: Putative RNA-guided DNA endonuclease (402 aa).

Asp188 is an active-site residue. The tract at residues 202–239 (KITNPKHERRDRARLAKAQRDVSRKAKGSANRKKARRK) is disordered. Residues 204–225 (TNPKHERRDRARLAKAQRDVSR) show a composition bias toward basic and acidic residues. Residues 226–239 (KAKGSANRKKARRK) are compositionally biased toward basic residues. Residue Glu272 is part of the active site. Positions 325, 328, 344, and 346 each coordinate Zn(2+). Residue Asp353 is part of the active site. Residues 373 to 402 (GIRPQRESSRTGRSSVKQEPQRATAGIPRL) form a disordered region.

The protein in the N-terminal section; belongs to the transposase 2 family. It in the C-terminal section; belongs to the transposase 35 family.

An RNA-guided dsDNA endonuclease. When guided by an RNA derived from the right-end element of its insertion sequence element (IS), cleaves DNA downstream of the transposon-associated motif (TAM). Cleaves supercoiled and linear DNA in a staggered manner 15-21 bases from the TAM yielding 5'-overhangs. Binds reRNA, an approximately 150 nucleotide base sRNA derived from the 3' end of its own gene, the right end (RE) of the insertion sequence (IS) plus sequence downstream of the IS. The protein is Putative RNA-guided DNA endonuclease of Streptomyces pristinaespiralis.